The chain runs to 318 residues: UDP-3-O-acylglucosamine N-acyltransferase 1 (318 aa).

H230 functions as the Proton acceptor in the catalytic mechanism.

Belongs to the transferase hexapeptide repeat family. LpxD subfamily. Homotrimer.

The catalysed reaction is a UDP-3-O-[(3R)-3-hydroxyacyl]-alpha-D-glucosamine + a (3R)-hydroxyacyl-[ACP] = a UDP-2-N,3-O-bis[(3R)-3-hydroxyacyl]-alpha-D-glucosamine + holo-[ACP] + H(+). The protein operates within bacterial outer membrane biogenesis; LPS lipid A biosynthesis. Functionally, catalyzes the N-acylation of UDP-3-O-acylglucosamine using 3-hydroxyacyl-ACP as the acyl donor. Is involved in the biosynthesis of lipid A, a phosphorylated glycolipid that anchors the lipopolysaccharide to the outer membrane of the cell. This chain is UDP-3-O-acylglucosamine N-acyltransferase 1, found in Sulfurimonas denitrificans (strain ATCC 33889 / DSM 1251) (Thiomicrospira denitrificans (strain ATCC 33889 / DSM 1251)).